The chain runs to 313 residues: Pyrimidine-specific ribonucleoside hydrolase RihB (313 aa).

Asp11 acts as the Proton acceptor in catalysis. Ca(2+) is bound by residues Asp11, Asp16, and Val124. Gln227 and His239 together coordinate substrate. Ca(2+) is bound at residue Asp240.

Belongs to the IUNH family. RihB subfamily. In terms of assembly, homotetramer. The cofactor is Ca(2+).

It catalyses the reaction a pyrimidine ribonucleoside + H2O = a pyrimidine nucleobase + D-ribose. In terms of biological role, hydrolyzes cytidine or uridine to ribose and cytosine or uracil, respectively. Has a clear preference for cytidine over uridine. Strictly specific for ribonucleosides. This chain is Pyrimidine-specific ribonucleoside hydrolase RihB, found in Escherichia coli O1:K1 / APEC.